The primary structure comprises 137 residues: Large ribosomal subunit protein mL61 (137 aa).

This sequence belongs to the mitochondrion-specific ribosomal protein mL61 family. In terms of assembly, component of the mitochondrial large ribosomal subunit (mt-LSU). Mature yeast 74S mitochondrial ribosomes consist of a small (37S) and a large (54S) subunit. The 37S small subunit contains a 15S ribosomal RNA (15S mt-rRNA) and 34 different proteins. The 54S large subunit contains a 21S rRNA (21S mt-rRNA) and 46 different proteins.

The protein resides in the mitochondrion. Functionally, component of the mitochondrial ribosome (mitoribosome), a dedicated translation machinery responsible for the synthesis of mitochondrial genome-encoded proteins, including at least some of the essential transmembrane subunits of the mitochondrial respiratory chain. The mitoribosomes are attached to the mitochondrial inner membrane and translation products are cotranslationally integrated into the membrane. mL61 is not essential in cells grown at 30 degrees Celsius but is required for mitochondrial translation in cells grown at 18 degrees Celsius. The sequence is that of Large ribosomal subunit protein mL61 (MRP49) from Saccharomyces cerevisiae (strain ATCC 204508 / S288c) (Baker's yeast).